The primary structure comprises 165 residues: Transcriptional repressor NrdR (165 aa).

Residues 3-34 fold into a zinc finger; that stretch reads CPFCRNPDSRVVDSRMADDGSAIRRRRQCPEC. In terms of domain architecture, ATP-cone spans 46–136; that stretch reads LTVIKRSGVG…VYQAFESLED (91 aa).

It belongs to the NrdR family. It depends on Zn(2+) as a cofactor.

In terms of biological role, negatively regulates transcription of bacterial ribonucleotide reductase nrd genes and operons by binding to NrdR-boxes. The chain is Transcriptional repressor NrdR from Arthrobacter sp. (strain FB24).